We begin with the raw amino-acid sequence, 105 residues long: Thioredoxin (105 aa).

The Thioredoxin domain occupies 1–105 (MVNNVTDSSF…SLLDWINKSI (105 aa)). C30 and C33 form a disulfide bridge.

The protein belongs to the thioredoxin family.

Component of the thioredoxin-thioredoxin reductase system. Participates in various redox reactions through the reversible oxidation of its active center dithiol to a disulfide and catalyzes dithiol-disulfide exchange reactions. The protein is Thioredoxin (trxA) of Rickettsia prowazekii (strain Madrid E).